Here is a 120-residue protein sequence, read N- to C-terminus: Putative ankyrin repeat protein RBE_1215 (120 aa).

ANK repeat units follow at residues 22-52 (DGGN…LTNI) and 59-88 (FGDT…ITSV).

The protein is Putative ankyrin repeat protein RBE_1215 of Rickettsia bellii (strain RML369-C).